We begin with the raw amino-acid sequence, 179 residues long: uncharacterized protein (179 aa).

4 consecutive transmembrane segments (helical) span residues 9-31 (WILVILFATLLFFAFTGIFVSTL), 41-63 (AFLLGFLGALVFANKLLFGYGSF), 114-136 (AYYGIFTLMLIIMLLSKFDLLGA), and 146-168 (AFWGAAVITLFVFALEITANYLM).

The protein localises to the cell membrane. This is an uncharacterized protein from Aquifex aeolicus (strain VF5).